A 173-amino-acid chain; its full sequence is Monothiol glutaredoxin-S14, chloroplastic (173 aa).

The transit peptide at 1–63 (MALRSVKTPT…KLKPTKFRCS (63 aa)) directs the protein to the chloroplast. Residues 72–173 (KDTLEKLVNS…QEEVEKAMCS (102 aa)) form the Glutaredoxin domain. Lysine 89 lines the glutathione pocket. [2Fe-2S] cluster-binding residues include cysteine 97 and phenylalanine 99. S-glutathionyl cysteine is present on cysteine 97. The segment at 97-100 (CGFS) is required for CAX1 activation. Arginine 126 and lysine 130 together coordinate glutathione. The segment at 133–137 (SNWPT) is required for CAX1 activation. Residues phenylalanine 138 and 151 to 152 (CD) each bind glutathione.

This sequence belongs to the glutaredoxin family. CGFS subfamily. [2Fe-2S]-bridged holo-homodimer. Interacts with N-terminal part of CAX1 in yeast. Interacts in vitro with SUFE1, BOLA1, BOLA2 and BOLA4. Interacts in vivo only with SUFE1, BOLA1 and BOLA4. Interacts with SBP1. Highly expressed in leaves, at intermediate levels in stems and at lower levels in roots and flowers.

Its subcellular location is the plastid. The protein resides in the chloroplast. Functionally, may only reduce GSH-thiol disulfides, but not protein disulfides (Potential). Probably involved in the regulation of the redox state of the BOLA proteins (Potential). May act as Fe-S cluster donors to Fe-S cluster-requiring proteins. May protect cells against protein oxidative damage. May regulate CAX cation transporters. The GRXS14-BOLA1 heterodimer binds a labile, oxygen sensitive Fe-S cluster. This is Monothiol glutaredoxin-S14, chloroplastic from Arabidopsis thaliana (Mouse-ear cress).